A 279-amino-acid polypeptide reads, in one-letter code: Phosphatidylglycerol--prolipoprotein diacylglyceryl transferase (279 aa).

Helical transmembrane passes span 18 to 38 (LSVRWYGIIIAVGILLGYFVA), 55 to 75 (IIFYSALFGFIAARIYFVIFQ), and 89 to 109 (IWHGGIAIHGGLIGGFIAGVI). Arg-137 contributes to the a 1,2-diacyl-sn-glycero-3-phospho-(1'-sn-glycerol) binding site. 2 consecutive transmembrane segments (helical) span residues 203–223 (LGETFFLYLTWYSIGRFFIEG) and 235–255 (IRVAQLVSILLILISISLIVY).

It belongs to the Lgt family.

It is found in the cell membrane. It carries out the reaction L-cysteinyl-[prolipoprotein] + a 1,2-diacyl-sn-glycero-3-phospho-(1'-sn-glycerol) = an S-1,2-diacyl-sn-glyceryl-L-cysteinyl-[prolipoprotein] + sn-glycerol 1-phosphate + H(+). The protein operates within protein modification; lipoprotein biosynthesis (diacylglyceryl transfer). Functionally, catalyzes the transfer of the diacylglyceryl group from phosphatidylglycerol to the sulfhydryl group of the N-terminal cysteine of a prolipoprotein, the first step in the formation of mature lipoproteins. In Staphylococcus aureus (strain Mu3 / ATCC 700698), this protein is Phosphatidylglycerol--prolipoprotein diacylglyceryl transferase.